We begin with the raw amino-acid sequence, 205 residues long: Cytochrome c biogenesis ATP-binding export protein CcmA (205 aa).

The ABC transporter domain maps to 2–204; it reads LEVSNLTAIR…SPKLRKIKLG (203 aa). 34-41 contacts ATP; that stretch reads GRNGTGKT.

It belongs to the ABC transporter superfamily. CcmA exporter (TC 3.A.1.107) family. As to quaternary structure, the complex is composed of two ATP-binding proteins (CcmA) and two transmembrane proteins (CcmB).

It localises to the cell inner membrane. The enzyme catalyses heme b(in) + ATP + H2O = heme b(out) + ADP + phosphate + H(+). Part of the ABC transporter complex CcmAB involved in the biogenesis of c-type cytochromes; once thought to export heme, this seems not to be the case, but its exact role is uncertain. Responsible for energy coupling to the transport system. In Vibrio parahaemolyticus serotype O3:K6 (strain RIMD 2210633), this protein is Cytochrome c biogenesis ATP-binding export protein CcmA.